The primary structure comprises 216 residues: Large ribosomal subunit protein uL3 (216 aa).

The segment at 134 to 153 (RATHGNSRSHNVPGSIGMAQ) is disordered. Q153 is subject to N5-methylglutamine.

It belongs to the universal ribosomal protein uL3 family. As to quaternary structure, part of the 50S ribosomal subunit. Forms a cluster with proteins L14 and L19. Post-translationally, methylated by PrmB.

One of the primary rRNA binding proteins, it binds directly near the 3'-end of the 23S rRNA, where it nucleates assembly of the 50S subunit. This Cupriavidus pinatubonensis (strain JMP 134 / LMG 1197) (Cupriavidus necator (strain JMP 134)) protein is Large ribosomal subunit protein uL3.